The sequence spans 828 residues: DNA topoisomerase 3 (828 aa).

The 146-residue stretch at 4-149 (RILNVAEKPS…KFEFYRAHFS (146 aa)) folds into the Toprim domain. In terms of domain architecture, Topo IA-type catalytic spans 167 to 617 (NEKDSIAVDT…STIEKYKQLY (451 aa)). Y361 functions as the O-(5'-phospho-DNA)-tyrosine intermediate in the catalytic mechanism. The disordered stretch occupies residues 763–828 (QQQQQQQQQQ…SDRNNNNFIF (66 aa)).

Belongs to the type IA topoisomerase family.

It carries out the reaction ATP-independent breakage of single-stranded DNA, followed by passage and rejoining.. In terms of biological role, releases the supercoiling and torsional tension of DNA introduced during the DNA replication and transcription by transiently cleaving and rejoining one strand of the DNA duplex. Introduces a single-strand break via transesterification at a target site in duplex DNA. The scissile phosphodiester is attacked by the catalytic tyrosine of the enzyme, resulting in the formation of a DNA-(5'-phosphotyrosyl)-enzyme intermediate and the expulsion of a 3'-OH DNA strand. The free DNA strand than undergoes passage around the unbroken strand thus removing DNA supercoils. Finally, in the religation step, the DNA 3'-OH attacks the covalent intermediate to expel the active-site tyrosine and restore the DNA phosphodiester backbone. In Dictyostelium discoideum (Social amoeba), this protein is DNA topoisomerase 3 (top3).